Reading from the N-terminus, the 262-residue chain is MATSEELKQLRCDCTYRSKLAEQAERYDEMADAMRTLVEQCVNNDKDELTVEERNLLSVAYKNAVGARRASWRIISSVEQKEMSKANVHNKNVAATYRKKVEEELNNICQDILNLLTKKLIPNTSESESKVFYYKMKGDYYRYISEFSCDEGKKEASNCAQEAYQKATDIAENELPSTHPIRLGLALNYSVFFYEILNQPHQACEMAKRAFDDAITEFDNVSEDSYKDSTLIMQLLRDNLTLWTSDLQGDQTEEKSKDEGLE.

Belongs to the 14-3-3 family. Homodimer. Forms a complex composed of CDPK1, PKA regulatory subunit PKAr and 14-3-3I; the complex is formed in merozoites in response to low extracellular level of K(+) and may play a role in microneme secretion. Interacts with CDPK1 (when phosphorylated) in a Ca(2+)-independent manner; the interaction does not regulate CDPK1 catalytic activity but is required for merozoite invasion of host erythrocytes. Interacts with PKA regulatory subunit PKAr (when phosphorylated) in a Ca(2+)-dependent manner. Interacts with histone H3 (when phosphorylated at 'Ser-28' or when phosphorylated at 'Ser-28' and 'Ser-32').

The protein resides in the cell membrane. It is found in the cytoplasm. Its subcellular location is the nucleus. In terms of biological role, adapter protein which binds to its partners, usually via a phosphoserine or phosphothreonine motif. Binding generally results in the modulation of the activity and/or cellular localization of the binding partner. Via its interaction with CDPK1 and PKAr, involved in merozoite microneme secretion and thus in merozoite invasion of host erythrocytes. In Plasmodium falciparum (isolate 3D7), this protein is 14-3-3 protein I.